The sequence spans 258 residues: Archaerhodopsin-3 (258 aa).

A propeptide spanning residues 1-6 is cleaved from the precursor; that stretch reads MDPIAL. Gln7 carries the post-translational modification Pyrrolidone carboxylic acid. At 7-18 the chain is on the extracellular side; the sequence is QAGYDLLGDGRP. The helical transmembrane segment at 19 to 40 threads the bilayer; that stretch reads ETLWLGIGTLLMLIGTFYFLVR. Over 41–49 the chain is Cytoplasmic; sequence GWGVTDKDA. A helical membrane pass occupies residues 50 to 71; sequence REYYAVTILVPGIASAAYLSMF. The Extracellular segment spans residues 72–89; the sequence is FGIGLTEVTVGGEMLDIY. The chain crosses the membrane as a helical span at residues 90–111; the sequence is YARYADWLFTTPLLLLDLALLA. Residues 112 to 114 are Cytoplasmic-facing; that stretch reads KVD. Residues 115–137 traverse the membrane as a helical segment; the sequence is RVTIGTLVGVDALMIVTGLIGAL. Topologically, residues 138–141 are extracellular; the sequence is SHTA. The helical transmembrane segment at 142–170 threads the bilayer; sequence IARYSWWLFSTICMIVVLYFLATSLRSAA. Residues 171-173 are Cytoplasmic-facing; the sequence is KER. The chain crosses the membrane as a helical span at residues 174–202; that stretch reads GPEVASTFNTLTALVLVLWTAYPILWIIG. Over 203–210 the chain is Extracellular; sequence TEGAGVVG. A helical transmembrane segment spans residues 211–243; the sequence is LGIETLLFMVLDVTAKVGFGFILLRSRAILGDT. Lys226 bears the N6-(retinylidene)lysine mark. Residues 244 to 258 are Cytoplasmic-facing; sequence EAPEPSAGADVSAAD.

Belongs to the archaeal/bacterial/fungal opsin family.

The protein resides in the cell membrane. In terms of biological role, light-driven proton pump. The polypeptide is Archaerhodopsin-3 (aop3) (Halorubrum sodomense).